The following is a 359-amino-acid chain: Type-1 angiotensin II receptor B (359 aa).

At 1 to 25 (MILNSSIEDGIKRIQDDCPKAGRHN) the chain is on the extracellular side. Asn4 carries N-linked (GlcNAc...) asparagine glycosylation. Angiotensin II-binding residues include Gln15 and Asp17. 2 disulfides stabilise this stretch: Cys18–Cys274 and Cys101–Cys180. The chain crosses the membrane as a helical span at residues 26–55 (YIFVMIPTLYSIIFVVGIFGNSLVVIVIYF). At 56-61 (YMKLKT) the chain is on the cytoplasmic side. A helical transmembrane segment spans residues 62–89 (VASVFLLNLALADLCFLLTLPLWAVYTA). At 90–98 (MEYQWPFGN) the chain is on the extracellular side. Residues 99-125 (HLCKIASASVSFNLYASVFLLTCLSID) form a helical membrane-spanning segment. Topologically, residues 126-141 (RYLAIVHPMKSRLRRT) are cytoplasmic. The chain crosses the membrane as a helical span at residues 142-165 (MLVAKVTCIIIWLMAGLASLPAVI). The Extracellular segment spans residues 166–190 (HRNVYFIENTNITVCAFHYESQNST). Arg167 is a binding site for angiotensin II. An N-linked (GlcNAc...) asparagine glycan is attached at Asn176. Phe182, His183, and Tyr184 together coordinate angiotensin II. Asn188 carries N-linked (GlcNAc...) asparagine glycosylation. Residues 191-216 (LPIGLGLTKNILGFVFPFVIILTSYT) traverse the membrane as a helical segment. Position 199 (Lys199) interacts with angiotensin II. The Cytoplasmic portion of the chain corresponds to 217–239 (LIWKALKKAYKIQKNTPRNDDIF). Residues 240-268 (RIIMAIVLFFFFSWVPHQIFSFLDVLIQL) form a helical membrane-spanning segment. At 269–278 (GVIHDCEIAD) the chain is on the extracellular side. The chain crosses the membrane as a helical span at residues 279–304 (VVDTAMPITICIAYFNNCLNPLFYGF). Residues 305–359 (LGKKFKRYFLQLLKYIPPKARSHAGLSTKMSTLSYRPSDNMSSSARKSAYCFEVE) are Cytoplasmic-facing. Cys355 carries the S-palmitoyl cysteine lipid modification.

The protein belongs to the G-protein coupled receptor 1 family. Interacts with MAS1. Interacts with ARRB1. Interacts with FLNA (via filamin repeat 21); increases PKA-mediated phosphorylation of FLNA. In terms of processing, C-terminal Ser or Thr residues may be phosphorylated.

It is found in the cell membrane. Functionally, receptor for angiotensin II, a vasoconstricting peptide, which acts as a key regulator of blood pressure and sodium retention by the kidney. The activated receptor in turn couples to G-alpha proteins G(q) (GNAQ, GNA11, GNA14 or GNA15) and thus activates phospholipase C and increases the cytosolic Ca(2+) concentrations, which in turn triggers cellular responses such as stimulation of protein kinase C. The protein is Type-1 angiotensin II receptor B (Agtr1b) of Mus musculus (Mouse).